Here is a 273-residue protein sequence, read N- to C-terminus: UPF0173 metal-dependent hydrolase Bpro_4324 (273 aa).

Belongs to the UPF0173 family.

The polypeptide is UPF0173 metal-dependent hydrolase Bpro_4324 (Polaromonas sp. (strain JS666 / ATCC BAA-500)).